Consider the following 1347-residue polypeptide: DExH-box ATP-dependent RNA helicase DExH11 (1347 aa).

Residues 263–291 (ELEGDDHTAGSESPKAEAEPDAKASISNE) are disordered. Residues 267-284 (DDHTAGSESPKAEAEPDA) are compositionally biased toward basic and acidic residues. A Helicase ATP-binding domain is found at 369–524 (ICCLEKGESV…WIGRTKQKEI (156 aa)). 382-389 (AHTSAGKT) provides a ligand contact to ATP. A DEVH box motif is present at residues 472-475 (DEVH). The segment at 566–625 (SQKKKNSNAVSVAPKQQMGSSAHQDGSKSQKHEAHSRGKQNKHSSVKDVGKSSYSGNSQN) is disordered. Residues 590–601 (DGSKSQKHEAHS) are compositionally biased toward basic and acidic residues. The Helicase C-terminal domain occupies 673 to 838 (DLTSSSEKSE…LTYIMILHLL (166 aa)).

This sequence belongs to the DExH box helicase family. SKI2 subfamily. In terms of assembly, component of the cytoplasmic SKI complex, which consists of SKI2, SKI3 and VIP3/SKI8. In terms of tissue distribution, expressed in vascular tissues of leaves and roots of young plants.

The protein localises to the cytoplasm. It carries out the reaction ATP + H2O = ADP + phosphate + H(+). Its function is as follows. Component of the SKI complex which is thought to be involved in exosome-mediated RNA decay and associates with transcriptionally active genes in a manner dependent on PAF1 complex (PAF1C). Involved in the regulation of potassium deprivation stress response. This is DExH-box ATP-dependent RNA helicase DExH11 from Arabidopsis thaliana (Mouse-ear cress).